A 445-amino-acid chain; its full sequence is Cytoplasmic tRNA 2-thiolation protein 2 (445 aa).

The segment covering 1-11 has biased composition (acidic residues); sequence MCSIGEDDFGD. The segment at 1 to 26 is disordered; the sequence is MCSIGEDDFGDEGGVHAMKEESPLPE. The segment covering 13-22 has biased composition (basic and acidic residues); sequence GGVHAMKEES.

The protein belongs to the CTU2/NCS2 family.

Its subcellular location is the cytoplasm. The protein operates within tRNA modification; 5-methoxycarbonylmethyl-2-thiouridine-tRNA biosynthesis. In terms of biological role, plays a central role in 2-thiolation of mcm(5)S(2)U at tRNA wobble positions of tRNA(Lys), tRNA(Glu) and tRNA(Gln). May act by forming a heterodimer with NCS6/CTU1 that ligates sulfur from thiocarboxylated URM1 onto the uridine of tRNAs at wobble position. In Aedes aegypti (Yellowfever mosquito), this protein is Cytoplasmic tRNA 2-thiolation protein 2.